Reading from the N-terminus, the 32-residue chain is Hainantoxin F8-35.23 (32 aa).

In terms of tissue distribution, expressed by the venom gland.

It is found in the secreted. The polypeptide is Hainantoxin F8-35.23 (Cyriopagopus hainanus (Chinese bird spider)).